The sequence spans 540 residues: Probable ATP-dependent RNA helicase DDX28 (540 aa).

The Mitochondrial targeting signal motif lies at 3-18; sequence LAGPSRLLALAVRLLL. A Q motif motif is present at residues 126-156; it reads GSFVDLGLEPRVLLALQEAVPEVVQPTSVQS. Residues 159–351 enclose the Helicase ATP-binding domain; the sequence is IPPLLRGRHL…SKVTSPDSLT (193 aa). ATP is bound at residue 172 to 179; sequence AETGSGKT. Positions 180-191 match the Nuclear export signal motif; sequence LSYLLPLFQRLL. Positions 286–289 match the DEAD motif; it reads DEVD. A Helicase C-terminal domain is found at 377–536; that stretch reads KVTELVQILK…GLASSVGDPL (160 aa). Positions 520–523 match the Nuclear localization signal motif; that stretch reads RRRR.

Belongs to the DEAD box helicase family. In terms of assembly, monomer. Found in a complex with GRSF1, DHX30, FASTKD2 and FASTKD5. Associates with the 16S mitochondrial rRNA (16S mt-rRNA) and with the mitochondrial ribosome large subunit (39S).

It is found in the nucleus. Its subcellular location is the mitochondrion. The protein resides in the mitochondrion matrix. It localises to the mitochondrion nucleoid. It catalyses the reaction ATP + H2O = ADP + phosphate + H(+). Its function is as follows. Plays an essential role in facilitating the proper assembly of the mitochondrial large ribosomal subunit and its helicase activity is essential for this function. May be involved in RNA processing or transport. Has RNA and Mg(2+)-dependent ATPase activity. The sequence is that of Probable ATP-dependent RNA helicase DDX28 (Ddx28) from Mus musculus (Mouse).